A 258-amino-acid polypeptide reads, in one-letter code: UPF0246 protein YaaA (258 aa).

The protein belongs to the UPF0246 family.

The polypeptide is UPF0246 protein YaaA (Escherichia coli (strain SMS-3-5 / SECEC)).